We begin with the raw amino-acid sequence, 172 residues long: Adenine phosphoribosyltransferase (172 aa).

The protein belongs to the purine/pyrimidine phosphoribosyltransferase family. In terms of assembly, homodimer.

It is found in the cytoplasm. It carries out the reaction AMP + diphosphate = 5-phospho-alpha-D-ribose 1-diphosphate + adenine. It functions in the pathway purine metabolism; AMP biosynthesis via salvage pathway; AMP from adenine: step 1/1. In terms of biological role, catalyzes a salvage reaction resulting in the formation of AMP, that is energically less costly than de novo synthesis. The chain is Adenine phosphoribosyltransferase from Clostridium tetani (strain Massachusetts / E88).